The sequence spans 966 residues: Receptor protein-tyrosine kinase CEPR1 (966 aa).

A signal peptide spans 1-22; sequence MRLKNFPFFVLFFFFCFNSNQS. Residues 23–592 are Extracellular-facing; sequence WGLMSSNQQP…QEPHGKKKLS (570 aa). N-linked (GlcNAc...) asparagine glycosylation occurs at Asn-61. LRR repeat units follow at residues 70-94, 95-120, 122-144, 145-168, 170-194, 195-218, 219-242, 245-267, 268-291, 292-315, 317-339, 341-363, 365-386, 387-411, 412-435, 437-459, 460-483, 484-507, 508-531, and 533-554; these read QGLV…VCSY, FPNL…TIPN, SLLR…FSQM, KSLR…IFNL, DLEY…VSKL, TKLT…IGNL, TSLV…IGNL, LRQL…IGNL, KNLT…ICSL, PNLR…LGNS, TLKI…LGSS, PMIA…VCKS, KLLY…TYGS, CKTL…VMSL, PHVS…IGNA, NLSE…LSHS, TNLV…VGRL, RKLN…LSNL, KSLN…LSEL, and PTSI…LIRG. 4 N-linked (GlcNAc...) asparagine glycosylation sites follow: Asn-109, Asn-120, Asn-128, and Asn-167. Residues Asn-217 and Asn-241 are each glycosylated (N-linked (GlcNAc...) asparagine). Asn-269 and Asn-301 each carry an N-linked (GlcNAc...) asparagine glycan. A glycan (N-linked (GlcNAc...) asparagine) is linked at Asn-437. N-linked (GlcNAc...) asparagine glycans are attached at residues Asn-527 and Asn-537. A helical membrane pass occupies residues 593–613; that stretch reads SIWAILVSVFILVLGVIMFYL. At 614-966 the chain is on the cytoplasmic side; the sequence is RQRMSKNRAV…VSDHLTQTRL (353 aa). Residues 656–934 enclose the Protein kinase domain; the sequence is LVDKNIVGHG…TMNEVVQLLI (279 aa). ATP is bound by residues 662–670 and Lys-684; that span reads VGHGGSGTV. 2 positions are modified to phosphotyrosine: Tyr-738 and Tyr-775. Asp-788 (proton acceptor) is an active-site residue. Phosphotyrosine is present on residues Tyr-831 and Tyr-838. A disordered region spans residues 937–966; it reads TPQGGPDMTSKPTTKIKDSIVSDHLTQTRL.

Belongs to the protein kinase superfamily. Ser/Thr protein kinase family. Interacts with the root-derived peptides CEP1, CEP3 and CEP5. In terms of tissue distribution, expressed in the vasculature, especially in phloem and procambium regions, of stems, leaves, cotyledons, sepals, pedals, pedicels, hypocotyls and roots (in primary and lateral roots, but not in root tips). Expressed in the root from the basal meristem onward. Present in the phloem pole pericycle and in the adjacent phloem.

The protein localises to the cell membrane. It carries out the reaction L-tyrosyl-[protein] + ATP = O-phospho-L-tyrosyl-[protein] + ADP + H(+). Receptor kinase involved in the perception of C-terminally encoded plant signaling peptide (CEP) and subsequent regulation of root and shoot development. Required for xylem and phloem cell files morphology and organization, probably by preventing ectopic lignification in phloem cells. Together with CEPR2, mediates systemic nitrogen (N)-demand signaling upon the perception of root-derived peptides (e.g. CEP1) via the up-regulation of genes involved in N uptake and assimilation pathways. Positively regulates lateral root initiation and development; probably repressed by the signaling peptide CEP5. In Arabidopsis thaliana (Mouse-ear cress), this protein is Receptor protein-tyrosine kinase CEPR1.